Reading from the N-terminus, the 90-residue chain is Small ribosomal subunit protein uS15 (90 aa).

The protein belongs to the universal ribosomal protein uS15 family. Part of the 30S ribosomal subunit. Forms a bridge to the 50S subunit in the 70S ribosome, contacting the 23S rRNA.

Functionally, one of the primary rRNA binding proteins, it binds directly to 16S rRNA where it helps nucleate assembly of the platform of the 30S subunit by binding and bridging several RNA helices of the 16S rRNA. Its function is as follows. Forms an intersubunit bridge (bridge B4) with the 23S rRNA of the 50S subunit in the ribosome. The sequence is that of Small ribosomal subunit protein uS15 from Wolbachia sp. subsp. Drosophila simulans (strain wRi).